Here is a 448-residue protein sequence, read N- to C-terminus: Two-component sensor PhoQ (448 aa).

The signal sequence occupies residues 1–33 (MIRSLRIRLMLGAAALAVLFMLALLPALQRAFG). The chain crosses the membrane as a helical span at residues 169–189 (WLGGALLVLLGLLWLGLTWGF). Positions 186 to 237 (TWGFRAMRGLSSELDQIESGERESLSEEHPRELLRLTHSLNRLLRSEHKQRE) constitute an HAMP domain. Positions 245-448 (DLAHSLKTPL…ACFRIRFATV (204 aa)) constitute a Histidine kinase domain. His-248 bears the Phosphohistidine; by autocatalysis mark.

Its subcellular location is the membrane. The enzyme catalyses ATP + protein L-histidine = ADP + protein N-phospho-L-histidine.. In terms of biological role, member of the two-component regulatory system PhoP/PhoQ that plays a role in the regulation of resistance towards polymyxin B and cationic antimicrobial peptides in response to limiting concentrations of Mg(2+). May function as a membrane-associated protein kinase that phosphorylates PhoP in response to environmental signals leading to activation of specific gene promoters. The chain is Two-component sensor PhoQ (phoQ) from Pseudomonas aeruginosa (strain ATCC 15692 / DSM 22644 / CIP 104116 / JCM 14847 / LMG 12228 / 1C / PRS 101 / PAO1).